Consider the following 262-residue polypeptide: Small ribosomal subunit protein uS2 (262 aa).

It belongs to the universal ribosomal protein uS2 family.

This chain is Small ribosomal subunit protein uS2, found in Borreliella afzelii (strain PKo) (Borrelia afzelii).